A 251-amino-acid polypeptide reads, in one-letter code: NAD kinase (251 aa).

The Proton acceptor role is filled by aspartate 51. NAD(+)-binding positions include 51–52 (DG), lysine 56, 113–114 (NE), lysine 124, histidine 140, aspartate 142, 153–158 (TGYSLS), and alanine 177.

The protein belongs to the NAD kinase family. A divalent metal cation is required as a cofactor.

It localises to the cytoplasm. The catalysed reaction is NAD(+) + ATP = ADP + NADP(+) + H(+). Functionally, involved in the regulation of the intracellular balance of NAD and NADP, and is a key enzyme in the biosynthesis of NADP. Catalyzes specifically the phosphorylation on 2'-hydroxyl of the adenosine moiety of NAD to yield NADP. This is NAD kinase from Thermosipho melanesiensis (strain DSM 12029 / CIP 104789 / BI429).